The primary structure comprises 504 residues: MEAQVPLSTDILVIGGGPAGSYAAAVLAREGFKVVLLEKDVFPRYHIGESMLPSCRPFLRFIDFEEKMKNYGFFPKPGAALKLNQDKREGYTDFTANGPDNAAWNVVRSEFDDLLLRHAAELGVHVYEGVQVEKIHFSPDESTRPVSLAWSKGDGTQGDVSFNWLVDASGRNGIMSTRYLKNRTFNKSLKNVAVWGYWTGAGRYAPGTKRENAPWFEALTDETGWAWFIPLHNGATSVGVVLAEDESKRKKAQHRAESNGKSLSEVQHDCYMADLQRAPGLIQLLGSEAKFEGKLMSAGDYSYHASEYAGSHFRIAGDAGAFIDPFFSSGIHLALTGGLSAASTIAASIRGNCTEEEACAFHSSKVETAYTRFLFVVLGIYKQIRAQETAVLYEAEEDNFDRAIDSLRPVIQGCADADENLTEAELQSTLDFCRSVLAPNQQQNNLRTPVDTGAADVKAKHAPSETDAQNPLQSMDDCKRNFGTEVINGFYVKMEQGMLGLVCA.

FAD is bound by residues glycine 16, alanine 19, glutamate 49, and alanine 149. Positions 329 and 330 each coordinate chloride. Isoleucine 331 is a binding site for FAD. The tract at residues 444–475 (NNLRTPVDTGAADVKAKHAPSETDAQNPLQSM) is disordered.

This sequence belongs to the flavin-dependent halogenase family.

The enzyme catalyses melleolide F + FADH2 + chloride + O2 = 6'-chloromelleolide F + FAD + 2 H2O + H(+). In terms of biological role, flavin-dependent halogenase involved in the biosynthesis of melleolides, a range of antifungal and phytotoxic polyketide derivatives composed of an orsellinic acid (OA) moiety esterified to various sesquiterpene alcohols. The halogenase catalyzes the transfer of a single chlorine atom to the melleolide backbone, resulting in a 6'-chloromelleolide product. The enzyme acts on free substrate and does not depend on carrier-protein-dependent acceptor molecules. This chain is Flavin-dependent halogenase armH3, found in Armillaria mellea (Honey mushroom).